Consider the following 440-residue polypeptide: uncharacterized protein (440 aa).

Helical transmembrane passes span 24–44, 47–67, 93–113, 117–137, 155–175, 183–203, 229–249, 276–296, 323–343, 346–366, 379–399, and 400–420; these read VVIG…APAA, AGSG…CNAI, FWGY…CAAM, VGFY…VVAL, IVAV…GSGA, IGVD…FFAF, LALG…IAVL, VVQI…ILGV, PFRA…TADI, AIGF…ASAL, IPLV…LSSV, and AAGA…RIIT.

Belongs to the amino acid-polyamine-organocation (APC) superfamily.

Its subcellular location is the cell membrane. In terms of biological role, probable amino-acid or metabolite transport protein. This is an uncharacterized protein from Mycobacterium bovis (strain ATCC BAA-935 / AF2122/97).